Reading from the N-terminus, the 300-residue chain is MIQEGKLEQQFFDYLHSERNYSVNTSTAYENDLLDFRRFLNEQAITTYQQVTFLDVRIYLTELKQKSFSRTTVARKISSLRSFYTFLLRENVINENPFTYVSHAKNQLRLPKFFYSEEMEALFQVVYEDNETLTLRDRVLLEVLYGTGIRVSECAGILLPDLDTSYQAILIRGKGNKERYVPFGAYAEDAITDYLPERVNLMSRYKKSHDALLVNHYGDPLTTRGIRYCLTKIISKASLTRKIHPHMLRHTFATDLLNNGADMRTVQELLGHASLSSTQIYTHVTKEHLKSTYMKHHPRA.

Residues Ile2–Leu88 form the Core-binding (CB) domain. The Tyr recombinase domain occupies Arg109–Met294. Residues Arg150, Lys174, His246, Arg249, and His272 contribute to the active site. The O-(3'-phospho-DNA)-tyrosine intermediate role is filled by Tyr281.

Belongs to the 'phage' integrase family. XerC subfamily. Forms a cyclic heterotetrameric complex composed of two molecules of XerC and two molecules of XerD.

It localises to the cytoplasm. Its function is as follows. Site-specific tyrosine recombinase, which acts by catalyzing the cutting and rejoining of the recombining DNA molecules. The XerC-XerD complex is essential to convert dimers of the bacterial chromosome into monomers to permit their segregation at cell division. It also contributes to the segregational stability of plasmids. The chain is Tyrosine recombinase XerC from Listeria monocytogenes serovar 1/2a (strain ATCC BAA-679 / EGD-e).